A 1065-amino-acid polypeptide reads, in one-letter code: Valine--tRNA ligase, mitochondrial (1065 aa).

A mitochondrion-targeting transit peptide spans 1 to 15; it reads MPHLPLASFRPPLWG. The tract at residues 27–52 is disordered; it reads ALCTQPEPHGSPVSRRNREAKQKRLR. Residues 42 to 52 show a composition bias toward basic and acidic residues; that stretch reads RNREAKQKRLR. The short motif at 146–156 is the 'HIGH' region element; sequence PNVTGSLHIGH. The 'KMSKS' region signature appears at 659–663; it reads KMSKS. Lys-662 contacts ATP.

It belongs to the class-I aminoacyl-tRNA synthetase family.

It is found in the mitochondrion. The catalysed reaction is tRNA(Val) + L-valine + ATP = L-valyl-tRNA(Val) + AMP + diphosphate. Its function is as follows. Catalyzes the attachment of valine to tRNA(Val) in a two-step reaction: valine is first activated by ATP to form Val-AMP and then transferred to the acceptor end of tRNA(Val). The polypeptide is Valine--tRNA ligase, mitochondrial (Vars2) (Rattus norvegicus (Rat)).